The sequence spans 396 residues: Tryptophan synthase beta chain (396 aa).

Residue Lys-86 is modified to N6-(pyridoxal phosphate)lysine.

The protein belongs to the TrpB family. As to quaternary structure, tetramer of two alpha and two beta chains. The cofactor is pyridoxal 5'-phosphate.

It carries out the reaction (1S,2R)-1-C-(indol-3-yl)glycerol 3-phosphate + L-serine = D-glyceraldehyde 3-phosphate + L-tryptophan + H2O. The protein operates within amino-acid biosynthesis; L-tryptophan biosynthesis; L-tryptophan from chorismate: step 5/5. Functionally, the beta subunit is responsible for the synthesis of L-tryptophan from indole and L-serine. The polypeptide is Tryptophan synthase beta chain (Francisella tularensis subsp. novicida (strain U112)).